Reading from the N-terminus, the 317-residue chain is 4-diphosphocytidyl-2-C-methyl-D-erythritol kinase (317 aa).

The active site involves lysine 17. An ATP-binding site is contributed by 109 to 119; that stretch reads PVAGGMGGGSA. The active site involves aspartate 151.

It belongs to the GHMP kinase family. IspE subfamily.

It carries out the reaction 4-CDP-2-C-methyl-D-erythritol + ATP = 4-CDP-2-C-methyl-D-erythritol 2-phosphate + ADP + H(+). It functions in the pathway isoprenoid biosynthesis; isopentenyl diphosphate biosynthesis via DXP pathway; isopentenyl diphosphate from 1-deoxy-D-xylulose 5-phosphate: step 3/6. Catalyzes the phosphorylation of the position 2 hydroxy group of 4-diphosphocytidyl-2C-methyl-D-erythritol. The sequence is that of 4-diphosphocytidyl-2-C-methyl-D-erythritol kinase from Paenarthrobacter aurescens (strain TC1).